The primary structure comprises 451 residues: MRIILAGTGSAVGKTTIATGIMKALSEEYNVQPFKVGPDYIDPTYHTLATGNTSRNLDSFFMKEGQVRDAFLKAMEKKDIAIIEGVRGLYEGIDSINDIGSTASIAKSLNAPVILIINSRSLVKSAAALVLGFKALDPEINIAGVILNKVKNNAHYLKTKKSIEEITDVEVIGGIIRDDSISIEQRHLGLVPAVERENSLSFIELWSNIIKESIDLDRLVEIAKEAPKLTSPREDIWNKLNKQKVKIGVAYDEVFNFYYKENIESLEANSCKVEYFSPLKDESLPDVDGLYIGGGYPELFSKELSQNTVLLKQIKQFHMENRPIFAECGGLMYLMNSIHEDKQVGVYPYNSILTDKVQALKYTIAEVKKDNIISKKGEKFNGHEFHYSKVLVDNSNIKHDLAFNILRGKGSYNNQDGFMEKNTLASYVHTHVAAMPNFGGNLAISAREVGG.

Positions 246-437 (KIGVAYDEVF…VHTHVAAMPN (192 aa)) constitute a GATase cobBQ-type domain. C328 serves as the catalytic Nucleophile.

This sequence belongs to the CobB/CbiA family. Requires Mg(2+) as cofactor.

The enzyme catalyses cob(II)yrinate + 2 L-glutamine + 2 ATP + 2 H2O = cob(II)yrinate a,c diamide + 2 L-glutamate + 2 ADP + 2 phosphate + 2 H(+). The catalysed reaction is Ni-sirohydrochlorin + 2 L-glutamine + 2 ATP + 2 H2O = Ni-sirohydrochlorin a,c-diamide + 2 L-glutamate + 2 ADP + 2 phosphate + 2 H(+). It functions in the pathway cofactor biosynthesis; adenosylcobalamin biosynthesis; cob(II)yrinate a,c-diamide from sirohydrochlorin (anaerobic route): step 10/10. Functionally, catalyzes the ATP-dependent amidation of the two carboxylate groups at positions a and c of cobyrinate, using either L-glutamine or ammonia as the nitrogen source. Involved in the biosynthesis of the unique nickel-containing tetrapyrrole coenzyme F430, the prosthetic group of methyl-coenzyme M reductase (MCR), which plays a key role in methanogenesis and anaerobic methane oxidation. Catalyzes the ATP-dependent amidation of the two carboxylate groups at positions a and c of Ni-sirohydrochlorin, using L-glutamine or ammonia as the nitrogen source. This is Cobyrinate a,c-diamide synthase from Methanobrevibacter smithii (strain ATCC 35061 / DSM 861 / OCM 144 / PS).